A 427-amino-acid polypeptide reads, in one-letter code: Neuronal pentraxin-2 (427 aa).

A signal peptide spans 1–17 (MLALLAAGVAFAVVVLA). N-linked (GlcNAc...) asparagine glycosylation is found at N144 and N185. The 202-residue stretch at 219–420 (DAFKVSLPFR…GASKWPVETC (202 aa)) folds into the Pentraxin (PTX) domain. A disulfide bond links C249 and C309. Ca(2+)-binding residues include N273, E351, Q352, D353, and Q363. An N-linked (GlcNAc...) asparagine glycan is attached at N389.

As to quaternary structure, homooligomer or heterooligomer (probably pentamer) with neuronal pentraxin receptor (NPTXR). Ca(2+) is required as a cofactor. As to expression, testis specific.

Its subcellular location is the cytoplasmic vesicle. It localises to the secretory vesicle. It is found in the acrosome lumen. Functionally, may be involved in binding, concentrating, and sorting soluble glycoproteins or glycolipids that are destined for the acrosome. This chain is Neuronal pentraxin-2 (NPTX2), found in Cavia porcellus (Guinea pig).